The primary structure comprises 251 residues: DNA-directed RNA polymerase III subunit RPC7 (251 aa).

A disordered region spans residues 186-251 (DDASTGDGAA…EEDPNEEAAF (66 aa)). Phosphoserine is present on S189. 2 stretches are compositionally biased toward acidic residues: residues 203–225 (GEDDDLADDDFEEDEDEEDDDDY) and 234–251 (GDDDDYGDEEDPNEEAAF).

Belongs to the eukaryotic RPC7 RNA polymerase subunit family. As to quaternary structure, component of the RNA polymerase III (Pol III) complex consisting of 17 subunits.

The protein localises to the nucleus. DNA-dependent RNA polymerase catalyzes the transcription of DNA into RNA using the four ribonucleoside triphosphates as substrates. Specific peripheric component of RNA polymerase III which synthesizes small RNAs, such as 5S rRNA and tRNAs. C31 is involved in the formation of the initiation complex. The polypeptide is DNA-directed RNA polymerase III subunit RPC7 (RPC31) (Saccharomyces cerevisiae (strain ATCC 204508 / S288c) (Baker's yeast)).